Here is a 770-residue protein sequence, read N- to C-terminus: MLPSLALLLLAAWTVRALEVPTDGNAGLLAEPQIAMFCGKLNMHMNVQNGKWESDPSGTKTCIGTKEGILQYCQEVYPELQITNVVEANQPVTIQNWCKRGRKQCKTHTHIVIPYRCLVGEFVSDALLVPDKCKFLHQERMDVCETHLHWHTVAKETCSEKSTNLHDYGMLLPCGIDKFRGVEFVCCPLAEESDSVDSADAEEDDSDVWWGGADTDYADGGEDKVVEVAEEEEVADVEEEEADDDEDVEDGDEVEEEAEEPYEEATERTTSTATTTTTTTESVEEVVREVCSEQAETGPCRAMISRWYFDVTEGKCVPFFYGGCGGNRNNFDTEEYCMAVCGSVSTQSLLKTTSEPLPQDPDKLPTTAASTPDAVDKYLETPGDENEHAHFQKAKERLEAKHRERMSQVMREWEEAERQAKNLPKADKKAVIQHFQEKVESLEQEAANERQQLVETHMARVEAMLNDRRRLALENYITALQAVPPRPHHVFNMLKKYVRAEQKDRQHTLKHFEHVRMVDPKKAAQIRSQVMTHLRVIYERMNQSLSLLYNVPAVAEEIQDEVDELLQKEQNYSDDVLANMISEPRISYGNDALMPSLTETKTTVELLPVNGEFSLDDLQPWHPFGVDSVPANTENEVEPVDARPAADRGLTTRPGSGLTNIKTEEISEVKMDAEFGHDSGFEVRHQKLVFFAEDVGSNKGAIIGLMVGGVVIATVIVITLVMLKKKQYTSIHHGVVEVDAAVTPEERHLSKMQQNGYENPTYKFFEQMQN.

An N-terminal signal peptide occupies residues 1–17; sequence MLPSLALLLLAAWTVRA. The Extracellular segment spans residues 18–701; the sequence is LEVPTDGNAG…AEDVGSNKGA (684 aa). Positions 28-123 are GFLD subdomain; it reads LLAEPQIAMF…PYRCLVGEFV (96 aa). The E1 domain maps to 28–189; that stretch reads LLAEPQIAMF…RGVEFVCCPL (162 aa). Disulfide bonds link C38–C62, C73–C117, C98–C105, C133–C187, C144–C174, and C158–C186. Residue 96-110 coordinates heparin; sequence NWCKRGRKQCKTHTH. The cuBD subdomain stretch occupies residues 131-189; sequence DKCKFLHQERMDVCETHLHWHTVAKETCSEKSTNLHDYGMLLPCGIDKFRGVEFVCCPL. Cu(2+) is bound by residues H147, H151, and Y168. The tract at residues 181–188 is zinc-binding; it reads GVEFVCCP. Zn(2+)-binding residues include E183, C186, and C187. Residues 193-207 show a composition bias toward acidic residues; sequence SDSVDSADAEEDDSD. Positions 193–284 are disordered; that stretch reads SDSVDSADAE…TTTTTTESVE (92 aa). S198 carries the post-translational modification Phosphoserine; by CK2. S206 carries the post-translational modification Phosphoserine; by CK1. 2 positions are modified to sulfotyrosine: Y217 and Y262. Acidic residues predominate over residues 228 to 264; it reads VAEEEEVADVEEEEADDDEDVEDGDEVEEEAEEPYEE. A compositionally biased stretch (low complexity) spans 268–281; sequence RTTSTATTTTTTTE. Intrachain disulfides connect C291–C341, C300–C324, and C316–C337. The 51-residue stretch at 291 to 341 folds into the BPTI/Kunitz inhibitor domain; it reads CSEQAETGPCRAMISRWYFDVTEGKCVPFFYGGCGGNRNNFDTEEYCMAVC. The residue at position 336 (Y336) is a Sulfotyrosine. The OX-2 signature appears at 344 to 365; that stretch reads VSTQSLLKTTSEPLPQDPDKLP. One can recognise an E2 domain in the interval 374–565; sequence AVDKYLETPG…EEIQDEVDEL (192 aa). The heparin-binding stretch occupies residues 391–423; that stretch reads FQKAKERLEAKHRERMSQVMREWEEAERQAKNL. S441 is subject to Phosphoserine. The heparin-binding stretch occupies residues 491–522; sequence FNMLKKYVRAEQKDRQHTLKHFEHVRMVDPKK. Y497 carries the post-translational modification Phosphotyrosine. The segment at 523–540 is collagen-binding; it reads AAQIRSQVMTHLRVIYER. N-linked (GlcNAc...) asparagine glycans are attached at residues N542 and N571. 2 residues coordinate Cu(2+): H677 and H685. Residues H677 and H685 each contribute to the Zn(2+) site. Residues 695–722 are interaction with PSEN1; sequence VGSNKGAIIGLMVGGVVIATVIVITLVM. The helical transmembrane segment at 702-722 threads the bilayer; sequence IIGLMVGGVVIATVIVITLVM. The Cytoplasmic segment spans residues 723–770; it reads LKKKQYTSIHHGVVEVDAAVTPEERHLSKMQQNGYENPTYKFFEQMQN. A Basolateral sorting signal motif is present at residues 724-734; the sequence is KKKQYTSIHHG. The residue at position 729 (T729) is a Phosphothreonine. A Phosphoserine; by APP-kinase I modification is found at S730. Positions 732–751 are interaction with G(o)-alpha; the sequence is HHGVVEVDAAVTPEERHLSK. Phosphothreonine; by CDK5 and MAPK10 and LRRK2 is present on T743. Residues 756-770 are interaction with DAB2; it reads GYENPTYKFFEQMQN. The required for the interaction with KIF5B and for anterograde transport in axons stretch occupies residues 756–770; the sequence is GYENPTYKFFEQMQN. Phosphotyrosine; by ABL1 is present on Y757. Residues 757-762 carry the YENPXY motif; contains endocytosis signal motif; that stretch reads YENPTY. K763 participates in a covalent cross-link: Glycyl lysine isopeptide (Lys-Gly) (interchain with G-Cter in ubiquitin).

Belongs to the APP family. Binds, via its C-terminus, to the PID domain of several cytoplasmic proteins, including APBB family members, the APBA family, MAPK8IP1, SHC1, NUMB and DAB1. Binding to DAB1 inhibits its serine phosphorylation. Interacts (via NPXY motif) with DAB2 (via PID domain); the interaction is impaired by tyrosine phosphorylation of the NPXY motif. Also interacts with GPCR-like protein BPP, APPBP1, IB1, KNS2 (via its TPR domains), APPBP2 (via BaSS) and DDB1. In vitro, it binds MAPT via the MT-binding domains. Associates with microtubules in the presence of ATP and in a kinesin-dependent manner. Interacts, through a C-terminal domain, with GNAO1. Amyloid-beta protein 42 binds CHRNA7 in hippocampal neurons. Amyloid-beta associates with HADH2. Interacts with ANKS1B and AGER. Interacts with CPEB1. Interacts with ITM2B. Interacts with ITM2C. Interacts with IDE. Can form homodimers; dimerization is enhanced in the presence of Cu(2+) ions. Can form homodimers; this is promoted by heparin binding. Amyloid-beta protein 40 interacts with S100A9. CTF-alpha product of APP interacts with GSAP. Isoform APP695 interacts with SORL1 (via N-terminal ectodomain); this interaction retains APP in the trans-Golgi network and reduces processing into soluble APP-alpha and amyloid-beta peptides. The C99 fragment also interacts with SORL1. Isoform APP751 interacts with SORL1. Isoform APP770 interacts with SORL1. Interacts with PLD3. Interacts with VDAC1. Interacts with NSG1; could regulate APP processing. Amyloid-beta protein 42 interacts with FPR2. Interacts with SYT7. Interacts (via transmembrane region) with PSEN1; the interaction is direct. Interacts with LRRK2. Interacts (via cytoplasmic domain) with KIF5B. Interacts (via C-terminus) with APBB2/FE65L1 (via C-terminus). Interacts (via intracellular domain) with APBB3. Proteolytically processed under normal cellular conditions. Cleavage either by alpha-secretase, beta-secretase or theta-secretase leads to generation and extracellular release of soluble APP peptides, S-APP-alpha and S-APP-beta, and the retention of corresponding membrane-anchored C-terminal fragments, C80, C83 and C99. Subsequent processing of C80 and C83 by gamma-secretase yields P3 peptides. This is the major secretory pathway and is non-amyloidogenic. Alternatively, presenilin/nicastrin-mediated gamma-secretase processing of C99 releases the amyloid-beta proteins, amyloid-beta protein 40 and amyloid-beta protein 42, major components of amyloid plaques, and the cytotoxic C-terminal fragments, gamma-CTF(50), gamma-CTF(57) and gamma-CTF(59). PSEN1 cleavage is more efficient with C83 than with C99 as substrate (in vitro). Amyloid-beta protein 40 and Amyloid-beta protein 42 are cleaved by ACE. Many other minor amyloid-beta peptides, amyloid-beta 1-X peptides, are found in cerebral spinal fluid (CSF) including the amyloid-beta X-15 peptides, produced from the cleavage by alpha-secretase. In terms of processing, proteolytically cleaved by caspases during neuronal apoptosis. Cleavage at Asp-739 by either CASP6, CASP8 or CASP9 results in the production of the neurotoxic C31 peptide and the increased production of amyloid-beta peptides. Post-translationally, N- and O-glycosylated. Phosphorylation in the C-terminal on tyrosine, threonine and serine residues is neuron-specific. Phosphorylation can affect APP processing, neuronal differentiation and interaction with other proteins. Phosphorylated on Thr-743 in neuronal cells by Cdc5 kinase and Mapk10, in dividing cells by Cdc2 kinase in a cell-cycle dependent manner with maximal levels at the G2/M phase and, in vitro, by GSK-3-beta. The Thr-743 phosphorylated form causes a conformational change which reduces binding of Fe65 family members. In dopaminergic (DA) neurons, phosphorylation on Thr-743 by LRKK2 promotes the production and the nuclear translocation of the APP intracellular domain (AICD) which induces DA neuron apoptosis. Phosphorylation on Tyr-757 is required for SHC binding. Phosphorylated in the extracellular domain by casein kinases on both soluble and membrane-bound APP. This phosphorylation is inhibited by heparin. In terms of processing, extracellular binding and reduction of copper, results in a corresponding oxidation of Cys-144 and Cys-158, and the formation of a disulfide bond. Post-translationally, trophic-factor deprivation triggers the cleavage of surface APP by beta-secretase to release sAPP-beta which is further cleaved to release an N-terminal fragment of APP (N-APP). Amyloid-beta peptides are degraded by IDE. In terms of processing, sulfated on tyrosine residues. As to expression, expressed in the brain with expression in cortex, cerebellum, hippocampus, olfactory bulb, neurons, astrocytes and microglia (at protein level). Expressed in the retinal lens. Expressed at a low level in muscle cells (at protein level). In terms of tissue distribution, expressed in kidney. Widely expressed. Expressed in several different brain regions including hippocampus, substantia nigra pars compacta and cerebellum. Within the cerebellum, abundantly expressed in Purkinje cells. As to expression, expressed in the brain, kidney and liver. Expressed in several different brain regions including hippocampus, substantia nigra pars compacta and cerebellum. Within the cerebellum, abundantly expressed in Purkinje cells. In terms of tissue distribution, expressed in several different brain regions including hippocampus, substantia nigra pars compacta and cerebellum. Within the cerebellum, abundantly expressed in Purkinje cells.

Its subcellular location is the cell membrane. It localises to the membrane. The protein localises to the perikaryon. The protein resides in the cell projection. It is found in the growth cone. Its subcellular location is the clathrin-coated pit. It localises to the early endosome. The protein localises to the cytoplasmic vesicle. The protein resides in the golgi apparatus. It is found in the trans-Golgi network. Its subcellular location is the endoplasmic reticulum. It localises to the secreted. The protein localises to the cell surface. The protein resides in the nucleus. It is found in the cytoplasm. Functionally, functions as a cell surface receptor and performs physiological functions on the surface of neurons relevant to neurite growth, neuronal adhesion and axonogenesis. Interaction between APP molecules on neighboring cells promotes synaptogenesis. Involved in cell mobility and transcription regulation through protein-protein interactions. Can promote transcription activation through binding to APBB1-KAT5 and inhibit Notch signaling through interaction with Numb. Couples to apoptosis-inducing pathways such as those mediated by G(o) and JIP. Inhibits G(o)-alpha ATPase activity. Acts as a kinesin I membrane receptor, mediating the axonal transport of beta-secretase and presenilin 1. By acting as a kinesin I membrane receptor, plays a role in axonal anterograde transport of cargo towards synapses in axons. May be involved in copper homeostasis/oxidative stress through copper ion reduction. Can regulate neurite outgrowth through binding to components of the extracellular matrix such as heparin and collagen I and IV. The splice isoforms that contain the BPTI domain possess protease inhibitor activity. Induces a AGER-dependent pathway that involves activation of p38 MAPK, resulting in internalization of amyloid-beta peptide and leading to mitochondrial dysfunction in cultured cortical neurons. Provides Cu(2+) ions for GPC1 which are required for release of nitric oxide (NO) and subsequent degradation of the heparan sulfate chains on GPC1. Its function is as follows. Amyloid-beta peptides are lipophilic metal chelators with metal-reducing activity. Binds transient metals such as copper, zinc and iron. Rat and mouse amyloid-beta peptides bind only weakly transient metals and have little reducing activity due to substitutions of transient metal chelating residues. Amyloid-beta protein 42 may activate mononuclear phagocytes in the brain and elicit inflammatory responses. Promotes both tau aggregation and TPK II-mediated phosphorylation. Also binds GPC1 in lipid rafts. The gamma-CTF peptides as well as the caspase-cleaved peptides, including C31, are potent enhancers of neuronal apoptosis. The sequence is that of Amyloid-beta precursor protein from Mus musculus (Mouse).